The sequence spans 159 residues: Eukaryotic translation initiation factor 5A-4 (159 aa).

A compositionally biased stretch (basic and acidic residues) spans 1-12; sequence MSDEEHQFESKA. A disordered region spans residues 1–21; it reads MSDEEHQFESKADAGASKTYP. Hypusine is present on Lys52.

Belongs to the eIF-5A family. In terms of processing, lys-52 undergoes hypusination, a unique post-translational modification that consists in the addition of a butylamino group from spermidine to lysine side chain, leading to the formation of the unusual amino acid hypusine. eIF-5As are the only known proteins to undergo this modification, which is essential for their function.

In terms of biological role, translation factor that promotes translation elongation and termination, particularly upon ribosome stalling at specific amino acid sequence contexts. Binds between the exit (E) and peptidyl (P) site of the ribosome and promotes rescue of stalled ribosome: specifically required for efficient translation of polyproline-containing peptides as well as other motifs that stall the ribosome. Acts as a ribosome quality control (RQC) cofactor by joining the RQC complex to facilitate peptidyl transfer during CAT tailing step. The chain is Eukaryotic translation initiation factor 5A-4 (EIF5A4) from Solanum tuberosum (Potato).